We begin with the raw amino-acid sequence, 67 residues long: Conotoxin Lt5.9 (67 aa).

The first 19 residues, 1–19, serve as a signal peptide directing secretion; sequence MLCLPVFIILLLLASPAAP. Positions 20 to 46 are excised as a propeptide; the sequence is KSFETKVQSDLTRTDGNMETEENLGEV.

The protein belongs to the conotoxin T superfamily. In terms of processing, contains 2 disulfide bonds that can be either 'C1-C3, C2-C4' or 'C1-C4, C2-C3', since these disulfide connectivities have been observed for conotoxins with cysteine framework V (for examples, see AC P0DQQ7 and AC P81755). As to expression, expressed by the venom duct.

Its subcellular location is the secreted. This is Conotoxin Lt5.9 from Conus litteratus (Lettered cone).